The primary structure comprises 605 residues: Elongation factor 4 (605 aa).

The 178-residue stretch at 4–181 (NKIKTFSIIA…AIVEYVPSPL (178 aa)) folds into the tr-type G domain. Residues 16-21 (DHGKST) and 128-131 (NKVD) contribute to the GTP site.

This sequence belongs to the TRAFAC class translation factor GTPase superfamily. Classic translation factor GTPase family. LepA subfamily.

The protein resides in the cell membrane. The catalysed reaction is GTP + H2O = GDP + phosphate + H(+). In terms of biological role, required for accurate and efficient protein synthesis under certain stress conditions. May act as a fidelity factor of the translation reaction, by catalyzing a one-codon backward translocation of tRNAs on improperly translocated ribosomes. Back-translocation proceeds from a post-translocation (POST) complex to a pre-translocation (PRE) complex, thus giving elongation factor G a second chance to translocate the tRNAs correctly. Binds to ribosomes in a GTP-dependent manner. The polypeptide is Elongation factor 4 (Mycoplasmopsis synoviae (strain 53) (Mycoplasma synoviae)).